The sequence spans 351 residues: uncharacterized protein (351 aa).

This is an uncharacterized protein from Gallus gallus (Chicken).